The following is a 270-amino-acid chain: uncharacterized protein (270 aa).

Residues 34 to 266 (LIARGLTKSY…PDVRRLYLGD (233 aa)) form the ABC transporter domain. 66–73 (GPNGAGKT) provides a ligand contact to ATP.

The protein belongs to the ABC transporter superfamily.

This is an uncharacterized protein from Rhizobium meliloti (strain 1021) (Ensifer meliloti).